Consider the following 258-residue polypeptide: MDEEAEVAEIAVLGGVGFNSHKDCESHPVTTPYGRITAYLTSIKGRSVVIIPRHAEEIHIPPHRVNYRGNIWAAHSLGAKRVISTNSVGSMRGHPVGSFVVLDDFIDFTRSRPSTFHDDKTVHVDVSEPYCPEIRASLRYSLEKRGISYTEGVYACTEGPRFETRAEIRMMSQFADVVGMTGVPEVVLAKELSLCYASLSIVTNQACGMTTQKLTADEVTEVVGKAQASIFKILSDAIGKIPETRNCMCRFAKEGACL.

53–54 (RH) lines the phosphate pocket. Methionine 180 is a substrate binding site. Position 181 (threonine 181) interacts with phosphate. 204–206 (NQA) lines the substrate pocket.

Belongs to the PNP/MTAP phosphorylase family. MTAP subfamily. As to quaternary structure, homotrimer.

It catalyses the reaction S-methyl-5'-thioinosine + phosphate = 5-(methylsulfanyl)-alpha-D-ribose 1-phosphate + hypoxanthine. The protein operates within purine metabolism; purine nucleoside salvage. In terms of biological role, catalyzes the reversible phosphorylation of S-methyl-5'-thioinosine (MTI) to hypoxanthine and 5-methylthioribose-1-phosphate. Involved in the breakdown of S-methyl-5'-thioadenosine (MTA), a major by-product of polyamine biosynthesis. Catabolism of (MTA) occurs via deamination to MTI and phosphorolysis to hypoxanthine. The sequence is that of Probable S-methyl-5'-thioinosine phosphorylase from Methanosarcina acetivorans (strain ATCC 35395 / DSM 2834 / JCM 12185 / C2A).